A 289-amino-acid polypeptide reads, in one-letter code: Homoserine kinase (289 aa).

79–89 (PLARGLGSSSS) is an ATP binding site.

This sequence belongs to the GHMP kinase family. Homoserine kinase subfamily.

It localises to the cytoplasm. The catalysed reaction is L-homoserine + ATP = O-phospho-L-homoserine + ADP + H(+). Its pathway is amino-acid biosynthesis; L-threonine biosynthesis; L-threonine from L-aspartate: step 4/5. In terms of biological role, catalyzes the ATP-dependent phosphorylation of L-homoserine to L-homoserine phosphate. This Streptococcus pneumoniae (strain Taiwan19F-14) protein is Homoserine kinase.